The sequence spans 229 residues: Large ribosomal subunit protein uL1 (229 aa).

Belongs to the universal ribosomal protein uL1 family. In terms of assembly, part of the 50S ribosomal subunit.

Its function is as follows. Binds directly to 23S rRNA. The L1 stalk is quite mobile in the ribosome, and is involved in E site tRNA release. In terms of biological role, protein L1 is also a translational repressor protein, it controls the translation of the L11 operon by binding to its mRNA. In Lactococcus lactis subsp. cremoris (strain MG1363), this protein is Large ribosomal subunit protein uL1.